The primary structure comprises 4450 residues: Gramicidin S synthase 2 (4450 aa).

Positions 467–1044 (DKTIHQLFTE…IQEISNYING (578 aa)) are domain 1 (proline-activating). Carrier domains follow at residues 971–1046 (VPTN…NGAK), 2006–2081 (APSS…ADGE), 3051–3126 (APRT…EETD), and 4089–4164 (APRN…THQE). 4 positions are modified to O-(pantetheine 4'-phosphoryl)serine: S1006, S2041, S3086, and S4124. Residues 1521-2080 (DHVAVGWKDQ…SALAQYIADG (560 aa)) form a domain 2 (valine-activating) region. The interval 2538 to 3134 (YATNKIFHEL…TDTEQYMAIQ (597 aa)) is domain 3 (ornithine-activating). The domain 4 (leucine-activating) stretch occupies residues 3590–4172 (IQELFEEQVK…QESENNVHQP (583 aa)).

Belongs to the ATP-dependent AMP-binding enzyme family. In terms of assembly, large multienzyme complex of GrsA and GrsB. Pantetheine 4'-phosphate serves as cofactor.

The protein operates within antibiotic biosynthesis; gramicidin S biosynthesis. This protein is a multifunctional enzyme, able to activate and polymerize the amino acids Pro, Val, Orn and Leu. Activation sites for these AA consist of individual domains. This chain is Gramicidin S synthase 2 (grsB), found in Brevibacillus brevis (Bacillus brevis).